A 687-amino-acid chain; its full sequence is Homoaconitase, mitochondrial (687 aa).

Residues 1–18 constitute a mitochondrion transit peptide; the sequence is MFAFRNRAVTQTLLVRRY. Residues Cys340, Cys400, and Cys403 each contribute to the [4Fe-4S] cluster site. Residues 481 to 490 show a composition bias toward acidic residues; sequence EAEADAEAAE. The disordered stretch occupies residues 481 to 500; the sequence is EAEADAEAAESDPAPSGGVL.

Belongs to the aconitase/IPM isomerase family. [4Fe-4S] cluster is required as a cofactor.

Its subcellular location is the mitochondrion. The enzyme catalyses (2R,3S)-homoisocitrate = cis-homoaconitate + H2O. It participates in amino-acid biosynthesis; L-lysine biosynthesis via AAA pathway; L-alpha-aminoadipate from 2-oxoglutarate: step 3/5. In terms of biological role, catalyzes the reversible hydration of cis-homoaconitate to (2R,3S)-homoisocitrate, a step in the alpha-aminoadipate pathway for lysine biosynthesis. In Yarrowia lipolytica (strain CLIB 122 / E 150) (Yeast), this protein is Homoaconitase, mitochondrial (LYS4).